A 61-amino-acid polypeptide reads, in one-letter code: DNA-directed RNA polymerase subunit Rpo6 (61 aa).

It belongs to the archaeal Rpo6/eukaryotic RPB6 RNA polymerase subunit family. As to quaternary structure, part of the RNA polymerase complex.

Its subcellular location is the cytoplasm. The catalysed reaction is RNA(n) + a ribonucleoside 5'-triphosphate = RNA(n+1) + diphosphate. DNA-dependent RNA polymerase (RNAP) catalyzes the transcription of DNA into RNA using the four ribonucleoside triphosphates as substrates. The chain is DNA-directed RNA polymerase subunit Rpo6 from Thermoplasma volcanium (strain ATCC 51530 / DSM 4299 / JCM 9571 / NBRC 15438 / GSS1).